We begin with the raw amino-acid sequence, 217 residues long: NADPH-dependent 3-demethoxyubiquinone 3-hydroxylase, mitochondrial (217 aa).

A mitochondrion-targeting transit peptide spans 1-35 (MSCAGAAAAPRLWRLRPGARRSLSAYGRRTSVRFR). The tract at residues 11–29 (RLWRLRPGARRSLSAYGRR) is required for nuclear localization. 2 repeat units span residues 48 to 129 (AVDR…TALL) and 130 to 217 (GKEG…SERL). The 2 X approximate tandem repeats stretch occupies residues 48-217 (AVDRIIRVDH…RVAIYLSERL (170 aa)). Arg51 lines the NADH pocket. Glu60, Glu90, His93, Glu142, Glu178, and His181 together coordinate Fe cation. Positions 212 and 216 each coordinate NADH.

Belongs to the COQ7 family. Component of a multi-subunit COQ enzyme complex. Interacts with COQ8B and COQ6. Interacts with COQ9. It depends on Fe cation as a cofactor. Expressed dominantly in heart and skeletal muscle.

It is found in the mitochondrion inner membrane. Its subcellular location is the mitochondrion. It localises to the nucleus. The protein localises to the chromosome. It catalyses the reaction a 5-methoxy-2-methyl-3-(all-trans-polyprenyl)benzoquinone + NADH + O2 = a 3-demethylubiquinone + NAD(+) + H2O. Its pathway is cofactor biosynthesis; ubiquinone biosynthesis. Catalyzes the hydroxylation of the 5-methoxy-2-methyl-3-(all-trans-polyprenyl)benzoquinone at the C6 position and participates in the biosynthesis of ubiquinone. Catalyzes the reaction through a substrate-mediated reduction pathway, whereby NADH shuttles electrons to 5-methoxy-2-methyl-3-(all-trans-decaprenyl)benzoquinone, which then transfers the electrons to the two Fe(3+) centers. The binding of 5-methoxy-2-methyl-3-(all-trans-polyprenyl)benzoquinone (DMQn) mediates reduction of the diiron center by nicotinamide adenine dinucleotide (NADH) and initiates oxygen activation for subsequent DMQ hydroxylation. The physiological substrates are 5-methoxy-2-methyl-3-(all-trans-nonaprenyl)benzoquinone (DMQ(9)) and 5-methoxy-2-methyl-3-(all-trans-decaprenyl)benzoquinone (DMQ(10)), however in vitro the enzyme does not have any specificity concerning the length of the polyprenyl tail, and accepts tails of various lengths with similar efficiency. Also has a structural role in the COQ enzyme complex, stabilizing other COQ polypeptides. Involved in lifespan determination in a ubiquinone-independent manner. Plays a role in modulating mitochondrial stress responses, acting in the nucleus, perhaps via regulating gene expression, independent of its characterized mitochondrial function in ubiquinone biosynthesis. This Homo sapiens (Human) protein is NADPH-dependent 3-demethoxyubiquinone 3-hydroxylase, mitochondrial.